Consider the following 175-residue polypeptide: Translation initiation factor IF-3, chloroplastic (175 aa).

This sequence belongs to the IF-3 family. In terms of assembly, monomer.

The protein localises to the plastid. It is found in the chloroplast. Functionally, IF-3 binds to the 30S ribosomal subunit and shifts the equilibrium between 70S ribosomes and their 50S and 30S subunits in favor of the free subunits, thus enhancing the availability of 30S subunits on which protein synthesis initiation begins. This chain is Translation initiation factor IF-3, chloroplastic, found in Cyanidioschyzon merolae (strain NIES-3377 / 10D) (Unicellular red alga).